Reading from the N-terminus, the 287-residue chain is Glutamate racemase (287 aa).

Residues 1–15 (MATKPQDANTTSREA) show a composition bias toward polar residues. A disordered region spans residues 1-25 (MATKPQDANTTSREAITSKADSPPR). Substrate contacts are provided by residues 32 to 33 (DS) and 64 to 65 (YG). Cys96 functions as the Proton donor/acceptor in the catalytic mechanism. Residue 97–98 (NT) coordinates substrate. Cys208 serves as the catalytic Proton donor/acceptor. 209–210 (TH) serves as a coordination point for substrate.

This sequence belongs to the aspartate/glutamate racemases family.

It carries out the reaction L-glutamate = D-glutamate. The protein operates within cell wall biogenesis; peptidoglycan biosynthesis. Provides the (R)-glutamate required for cell wall biosynthesis. In Yersinia pseudotuberculosis serotype I (strain IP32953), this protein is Glutamate racemase.